The sequence spans 185 residues: Capsid protein (185 aa).

The interval 135–185 (PNAPILSTLPETTVVRRRDRGRSPRRRTPSPRRRRSQSPRRRRSQSRESQC) is disordered. The span at 149–178 (VRRRDRGRSPRRRTPSPRRRRSQSPRRRRS) shows a compositional bias: basic residues. Residues serine 157, serine 164, and serine 172 each carry the phosphoserine; by host modification. A 1; half-length repeat occupies 157-163 (SPRRRTP). A 3 X 8 AA repeats of S-P-R-R-R-[PR]-S-Q region spans residues 157 to 179 (SPRRRTPSPRRRRSQSPRRRRSQ). A Bipartite nuclear localization signal motif is present at residues 160 to 177 (RRTPSPRRRRSQSPRRRR). 2 consecutive repeat copies span residues 164-171 (SPRRRRSQ) and 172-179 (SPRRRRSQ). The interval 179 to 185 (QSRESQC) is RNA binding.

Belongs to the orthohepadnavirus core antigen family. As to quaternary structure, homodimerizes, then multimerizes. Interacts with cytosol exposed regions of viral L glycoprotein present in the reticulum-to-Golgi compartment. Interacts with human FLNB. Phosphorylated form interacts with host importin alpha; this interaction depends on the exposure of the NLS, which itself depends upon genome maturation and/or phosphorylation of the capsid protein. Interacts with host NUP153. Post-translationally, phosphorylated by host SRPK1, SRPK2, and maybe protein kinase C or GAPDH. Phosphorylation is critical for pregenomic RNA packaging. Protein kinase C phosphorylation is stimulated by HBx protein and may play a role in transport of the viral genome to the nucleus at the late step during the viral replication cycle.

It is found in the virion. Its subcellular location is the host cytoplasm. In terms of biological role, self assembles to form an icosahedral capsid. Most capsids appear to be large particles with an icosahedral symmetry of T=4 and consist of 240 copies of capsid protein, though a fraction forms smaller T=3 particles consisting of 180 capsid proteins. Entering capsids are transported along microtubules to the nucleus. Phosphorylation of the capsid is thought to induce exposure of nuclear localization signal in the C-terminal portion of the capsid protein that allows binding to the nuclear pore complex via the importin (karyopherin-) alpha and beta. Capsids are imported in intact form through the nuclear pore into the nuclear basket, where it probably binds NUP153. Only capsids that contain the mature viral genome can release the viral DNA and capsid protein into the nucleoplasm. Immature capsids get stuck in the basket. Capsids encapsulate the pre-genomic RNA and the P protein. Pre-genomic RNA is reverse-transcribed into DNA while the capsid is still in the cytoplasm. The capsid can then either be directed to the nucleus, providing more genomes for transcription, or bud through the endoplasmic reticulum to provide new virions. This chain is Capsid protein, found in Hepatitis B virus genotype A3 (isolate Cameroon/CMR711/1994) (HBV-A).